The chain runs to 340 residues: Putative methionyl-tRNA formyltransferase (340 aa).

It belongs to the Fmt family.

It is found in the mitochondrion. The protein resides in the mitochondrion matrix. It localises to the cytoplasm. It carries out the reaction L-methionyl-tRNA(fMet) + (6R)-10-formyltetrahydrofolate = N-formyl-L-methionyl-tRNA(fMet) + (6S)-5,6,7,8-tetrahydrofolate + H(+). Its function is as follows. Formylates methionyl-tRNA in mitochondria and the cytoplasm. Responsible for the formylation of the N-terminally formylated (Nt-formylated) mitochondrial matrix proteins that are encoded by mitochondrial DNA. Nt-formylated proteins in the cytoplasm are strongly up-regulated in stationary phase or upon starvation for specific amino acids and are targeted for degradation by an E3 ubiquitin ligase-mediated fMet/N-end rule pathway. Increased Nt-formylation of cytosolic proteins appears to be important for adaptation to these stresses. The chain is Putative methionyl-tRNA formyltransferase (fmt1) from Schizosaccharomyces pombe (strain 972 / ATCC 24843) (Fission yeast).